Reading from the N-terminus, the 107-residue chain is MKGGLGNIMKQAQKMQEDMQKAQEEIAAMEVSGEAGAGMVKVTMTGRNEVRKVEIDPSLFEDDREMVEDLVAAAVNDAVQKVQRESQERMSGMAEGMGLPPGMKLPF.

Disordered stretches follow at residues Met-1–Glu-24 and Val-82–Phe-107. The span at Met-15–Glu-24 shows a compositional bias: basic and acidic residues.

Belongs to the YbaB/EbfC family. As to quaternary structure, homodimer.

The protein localises to the cytoplasm. It localises to the nucleoid. Functionally, binds to DNA and alters its conformation. May be involved in regulation of gene expression, nucleoid organization and DNA protection. This Halorhodospira halophila (strain DSM 244 / SL1) (Ectothiorhodospira halophila (strain DSM 244 / SL1)) protein is Nucleoid-associated protein Hhal_0231.